We begin with the raw amino-acid sequence, 339 residues long: Ribosomal RNA small subunit methyltransferase H (339 aa).

S-adenosyl-L-methionine contacts are provided by residues 56 to 58 (GGH), aspartate 76, phenylalanine 102, aspartate 123, and glutamine 130. Disordered stretches follow at residues 274-309 (RHSR…KAEV) and 320-339 (LRVA…PQHS). Over residues 325-339 (RTDTPYNTDPSPQHS) the composition is skewed to polar residues.

This sequence belongs to the methyltransferase superfamily. RsmH family.

It is found in the cytoplasm. It catalyses the reaction cytidine(1402) in 16S rRNA + S-adenosyl-L-methionine = N(4)-methylcytidine(1402) in 16S rRNA + S-adenosyl-L-homocysteine + H(+). Functionally, specifically methylates the N4 position of cytidine in position 1402 (C1402) of 16S rRNA. The chain is Ribosomal RNA small subunit methyltransferase H from Psychrobacter sp. (strain PRwf-1).